The sequence spans 217 residues: Vesicle transport through interaction with t-SNAREs homolog 1A (217 aa).

Topologically, residues 1–192 are cytoplasmic; that stretch reads MSSDFEGYEQ…GMLRRIIQNR (192 aa). Coiled-coil stretches lie at residues 31 to 92 and 112 to 178; these read PDEK…KRSR and ENQR…GKSS. The chain crosses the membrane as a helical; Anchor for type IV membrane protein span at residues 193 to 213; the sequence is ILLVILGIIVVIAILTAIAFF. At 214–217 the chain is on the vesicular side; it reads VKGH.

This sequence belongs to the VTI1 family. As to quaternary structure, interacts with distinct SNARE complexes that contain either STX5 or STX6. Interacts with NAPA and, to a lesser extent, with NAPG. Identified in a complex containing STX6, STX12, VAMP4 and VTI1A. Widely expressed.

The protein localises to the golgi apparatus membrane. Its function is as follows. V-SNARE that mediates vesicle transport pathways through interactions with t-SNAREs on the target membrane. These interactions are proposed to mediate aspects of the specificity of vesicle trafficking and to promote fusion of the lipid bilayers. Involved in vesicular transport from the late endosomes to the trans-Golgi network. Along with VAMP7, involved in an non-conventional RAB1-dependent traffic route to the cell surface used by KCNIP1 and KCND2. May be concerned with increased secretion of cytokines associated with cellular senescence. The polypeptide is Vesicle transport through interaction with t-SNAREs homolog 1A (Vti1a) (Mus musculus (Mouse)).